A 357-amino-acid chain; its full sequence is Chorismate synthase (357 aa).

Arg-48 lines the NADP(+) pocket. Residues 125–127 (RSS), 238–239 (NA), Gly-282, 297–301 (KPTSS), and Arg-323 each bind FMN.

This sequence belongs to the chorismate synthase family. As to quaternary structure, homotetramer. FMNH2 serves as cofactor.

The catalysed reaction is 5-O-(1-carboxyvinyl)-3-phosphoshikimate = chorismate + phosphate. Its pathway is metabolic intermediate biosynthesis; chorismate biosynthesis; chorismate from D-erythrose 4-phosphate and phosphoenolpyruvate: step 7/7. Functionally, catalyzes the anti-1,4-elimination of the C-3 phosphate and the C-6 proR hydrogen from 5-enolpyruvylshikimate-3-phosphate (EPSP) to yield chorismate, which is the branch point compound that serves as the starting substrate for the three terminal pathways of aromatic amino acid biosynthesis. This reaction introduces a second double bond into the aromatic ring system. The sequence is that of Chorismate synthase from Gluconacetobacter diazotrophicus (strain ATCC 49037 / DSM 5601 / CCUG 37298 / CIP 103539 / LMG 7603 / PAl5).